The chain runs to 271 residues: Undecaprenyl-diphosphatase (271 aa).

The next 8 helical transmembrane spans lie at 5-25, 45-65, 86-106, 114-134, 149-169, 189-209, 226-246, and 251-271; these read YALF…FLPV, AATF…AVFW, TLSL…GLAI, LFGP…LIIA, ISYK…WPGF, AAEF…GLDL, VGFI…LALI, and FIPF…VFVA.

This sequence belongs to the UppP family.

The protein resides in the cell inner membrane. The enzyme catalyses di-trans,octa-cis-undecaprenyl diphosphate + H2O = di-trans,octa-cis-undecaprenyl phosphate + phosphate + H(+). Catalyzes the dephosphorylation of undecaprenyl diphosphate (UPP). Confers resistance to bacitracin. This chain is Undecaprenyl-diphosphatase, found in Aeromonas hydrophila subsp. hydrophila (strain ATCC 7966 / DSM 30187 / BCRC 13018 / CCUG 14551 / JCM 1027 / KCTC 2358 / NCIMB 9240 / NCTC 8049).